The primary structure comprises 273 residues: Cell division protein ZipA (273 aa).

Position 1 (M1) is a topological domain, periplasmic. The helical transmembrane segment at E2 to F22 threads the bilayer. Topologically, residues D23 to R273 are cytoplasmic. The disordered stretch occupies residues E65–S125. Basic and acidic residues predominate over residues V111–K120.

The protein belongs to the ZipA family. As to quaternary structure, interacts with FtsZ via their C-terminal domains.

It is found in the cell inner membrane. Its function is as follows. Essential cell division protein that stabilizes the FtsZ protofilaments by cross-linking them and that serves as a cytoplasmic membrane anchor for the Z ring. Also required for the recruitment to the septal ring of downstream cell division proteins. The sequence is that of Cell division protein ZipA from Ectopseudomonas mendocina (strain ymp) (Pseudomonas mendocina).